The primary structure comprises 307 residues: Small ribosomal subunit biogenesis GTPase RsgA (307 aa).

One can recognise a CP-type G domain in the interval 80–237; sequence KADLRQTIVS…IVDTPGIKEF (158 aa). Residues 129–132 and 180–188 contribute to the GTP site; these read NKID and GQSGVGKSS. Zn(2+) contacts are provided by cysteine 261, cysteine 266, histidine 268, and cysteine 274.

The protein belongs to the TRAFAC class YlqF/YawG GTPase family. RsgA subfamily. As to quaternary structure, monomer. Associates with 30S ribosomal subunit, binds 16S rRNA. The cofactor is Zn(2+).

It is found in the cytoplasm. Functionally, one of several proteins that assist in the late maturation steps of the functional core of the 30S ribosomal subunit. Helps release RbfA from mature subunits. May play a role in the assembly of ribosomal proteins into the subunit. Circularly permuted GTPase that catalyzes slow GTP hydrolysis, GTPase activity is stimulated by the 30S ribosomal subunit. The sequence is that of Small ribosomal subunit biogenesis GTPase RsgA from Borreliella afzelii (strain PKo) (Borrelia afzelii).